Here is a 221-residue protein sequence, read N- to C-terminus: GTP cyclohydrolase 1 (221 aa).

Zn(2+) contacts are provided by C109, H112, and C180.

Belongs to the GTP cyclohydrolase I family. As to quaternary structure, toroid-shaped homodecamer, composed of two pentamers of five dimers.

The enzyme catalyses GTP + H2O = 7,8-dihydroneopterin 3'-triphosphate + formate + H(+). It functions in the pathway cofactor biosynthesis; 7,8-dihydroneopterin triphosphate biosynthesis; 7,8-dihydroneopterin triphosphate from GTP: step 1/1. The chain is GTP cyclohydrolase 1 from Serratia proteamaculans (strain 568).